A 263-amino-acid chain; its full sequence is Shikimate dehydrogenase (NADP(+)) (263 aa).

Residues 14-16 (SLS) and T60 each bind shikimate. The active-site Proton acceptor is K64. Residues N85 and D100 each coordinate shikimate. NADP(+)-binding positions include 123–127 (GAGGA), 146–151 (NRTPQR), and L205. Y207 is a shikimate binding site. Residue G228 coordinates NADP(+).

It belongs to the shikimate dehydrogenase family. Homodimer.

It carries out the reaction shikimate + NADP(+) = 3-dehydroshikimate + NADPH + H(+). It participates in metabolic intermediate biosynthesis; chorismate biosynthesis; chorismate from D-erythrose 4-phosphate and phosphoenolpyruvate: step 4/7. Involved in the biosynthesis of the chorismate, which leads to the biosynthesis of aromatic amino acids. Catalyzes the reversible NADPH linked reduction of 3-dehydroshikimate (DHSA) to yield shikimate (SA). This is Shikimate dehydrogenase (NADP(+)) from Thermus thermophilus (strain ATCC BAA-163 / DSM 7039 / HB27).